The sequence spans 335 residues: Glycerol-3-phosphate dehydrogenase [NAD(P)+] (335 aa).

NADPH-binding residues include Ser-15, Tyr-16, His-36, and Lys-110. 3 residues coordinate sn-glycerol 3-phosphate: Lys-110, Gly-139, and Thr-141. Ala-143 is a binding site for NADPH. Residues Lys-195, Asp-248, Ser-258, Arg-259, and Asn-260 each coordinate sn-glycerol 3-phosphate. Residue Lys-195 is the Proton acceptor of the active site. Arg-259 is an NADPH binding site. Residues Val-283 and Glu-285 each coordinate NADPH.

It belongs to the NAD-dependent glycerol-3-phosphate dehydrogenase family.

The protein localises to the cytoplasm. The catalysed reaction is sn-glycerol 3-phosphate + NAD(+) = dihydroxyacetone phosphate + NADH + H(+). It carries out the reaction sn-glycerol 3-phosphate + NADP(+) = dihydroxyacetone phosphate + NADPH + H(+). Its pathway is membrane lipid metabolism; glycerophospholipid metabolism. Its function is as follows. Catalyzes the reduction of the glycolytic intermediate dihydroxyacetone phosphate (DHAP) to sn-glycerol 3-phosphate (G3P), the key precursor for phospholipid synthesis. The chain is Glycerol-3-phosphate dehydrogenase [NAD(P)+] from Haemophilus influenzae (strain ATCC 51907 / DSM 11121 / KW20 / Rd).